The sequence spans 165 residues: MKTPRRRAREFAVQGIYQWQLNALTPATIEKNLRDNEQFAKADEALFRTLLYGVLNDPVRIESAIASHFERAPEDVSPVERAVLLMAAFELTQQAETPLAVIINEAIEIAKTFGGAEGHRFVNGVLDKYAAEVRPEEFEAVRSHRRNKRPAADKPVATDKPAAAE.

Residues 139–165 (EAVRSHRRNKRPAADKPVATDKPAAAE) form a disordered region.

Belongs to the NusB family.

Involved in transcription antitermination. Required for transcription of ribosomal RNA (rRNA) genes. Binds specifically to the boxA antiterminator sequence of the ribosomal RNA (rrn) operons. This is Transcription antitermination protein NusB from Laribacter hongkongensis (strain HLHK9).